We begin with the raw amino-acid sequence, 565 residues long: Proline--tRNA ligase (565 aa).

This sequence belongs to the class-II aminoacyl-tRNA synthetase family. ProS type 1 subfamily. Homodimer.

The protein localises to the cytoplasm. The enzyme catalyses tRNA(Pro) + L-proline + ATP = L-prolyl-tRNA(Pro) + AMP + diphosphate. Its function is as follows. Catalyzes the attachment of proline to tRNA(Pro) in a two-step reaction: proline is first activated by ATP to form Pro-AMP and then transferred to the acceptor end of tRNA(Pro). As ProRS can inadvertently accommodate and process non-cognate amino acids such as alanine and cysteine, to avoid such errors it has two additional distinct editing activities against alanine. One activity is designated as 'pretransfer' editing and involves the tRNA(Pro)-independent hydrolysis of activated Ala-AMP. The other activity is designated 'posttransfer' editing and involves deacylation of mischarged Ala-tRNA(Pro). The misacylated Cys-tRNA(Pro) is not edited by ProRS. This Francisella tularensis subsp. tularensis (strain WY96-3418) protein is Proline--tRNA ligase.